Consider the following 71-residue polypeptide: uncharacterized protein (71 aa).

This is an uncharacterized protein from Dictyostelium discoideum (Social amoeba).